The following is a 375-amino-acid chain: Actin-binding Rho-activating protein (375 aa).

The tract at residues 37-101 (ANENSTRQAQ…ATEVSHIKRK (65 aa)) is disordered. Residues 80 to 101 (PDGDREGRGSEEATEVSHIKRK) are compositionally biased toward basic and acidic residues. 2 positions are modified to phosphoserine: Ser150 and Ser182. Residues 175–197 (EPKWKSDSIDTEDSGYGGDMEER) form a disordered region. Actin-binding regions lie at residues 193 to 293 (DMEE…AERA) and 294 to 375 (KRAE…TLLE). 2 interaction with actin regions span residues 234–279 (SQVD…GDEG) and 346–375 (MRAR…TLLE).

Binds F-actin and ABLIM1, ABLIM2 and ABLIM3. Interaction with ABLIM2 and ABLIM3 enhances activity. As to expression, predominantly expressed in heart and skeletal muscle, and expressed at lower levels in adrenal gland, brain, kidney, liver, and testis.

The protein localises to the cytoplasm. The protein resides in the myofibril. It localises to the sarcomere. Its subcellular location is the cytoskeleton. Acts as an activator of serum response factor (SRF)-dependent transcription possibly by inducing nuclear translocation of MKL1 or MKL2 and through a mechanism requiring Rho-actin signaling. This Rattus norvegicus (Rat) protein is Actin-binding Rho-activating protein.